The primary structure comprises 384 residues: S-adenosylmethionine synthase (384 aa).

Residue histidine 15 participates in ATP binding. Mg(2+) is bound at residue aspartate 17. Position 43 (glutamate 43) interacts with K(+). Glutamate 56 and glutamine 99 together coordinate L-methionine. The segment at 99–109 (QSADINQGVDR) is flexible loop. Residues 164–166 (DAK), 230–231 (RF), aspartate 239, 245–246 (RK), alanine 262, and lysine 266 each bind ATP. L-methionine is bound at residue aspartate 239. Position 270 (lysine 270) interacts with L-methionine.

Belongs to the AdoMet synthase family. As to quaternary structure, homotetramer; dimer of dimers. It depends on Mg(2+) as a cofactor. K(+) serves as cofactor.

The protein localises to the cytoplasm. The enzyme catalyses L-methionine + ATP + H2O = S-adenosyl-L-methionine + phosphate + diphosphate. Its pathway is amino-acid biosynthesis; S-adenosyl-L-methionine biosynthesis; S-adenosyl-L-methionine from L-methionine: step 1/1. Functionally, catalyzes the formation of S-adenosylmethionine (AdoMet) from methionine and ATP. The overall synthetic reaction is composed of two sequential steps, AdoMet formation and the subsequent tripolyphosphate hydrolysis which occurs prior to release of AdoMet from the enzyme. The protein is S-adenosylmethionine synthase of Haemophilus influenzae (strain PittGG).